The sequence spans 523 residues: ATP synthase subunit alpha (523 aa).

179–186 (GDRQTGKT) is an ATP binding site.

The protein belongs to the ATPase alpha/beta chains family. As to quaternary structure, F-type ATPases have 2 components, CF(1) - the catalytic core - and CF(0) - the membrane proton channel. CF(1) has five subunits: alpha(3), beta(3), gamma(1), delta(1), epsilon(1). CF(0) has three main subunits: a(1), b(2) and c(9-12). The alpha and beta chains form an alternating ring which encloses part of the gamma chain. CF(1) is attached to CF(0) by a central stalk formed by the gamma and epsilon chains, while a peripheral stalk is formed by the delta and b chains.

The protein localises to the cell inner membrane. The enzyme catalyses ATP + H2O + 4 H(+)(in) = ADP + phosphate + 5 H(+)(out). Its function is as follows. Produces ATP from ADP in the presence of a proton gradient across the membrane. The alpha chain is a regulatory subunit. The polypeptide is ATP synthase subunit alpha (Vibrio parahaemolyticus serotype O3:K6 (strain RIMD 2210633)).